Reading from the N-terminus, the 1714-residue chain is Latrophilin Cirl (1714 aa).

Topologically, residues 1–765 are extracellular; that stretch reads MSSIDISGRY…LFTMFDGNMR (765 aa). Residues 26-115 form the SUEL-type lectin domain; the sequence is ACEGKKLTIE…KYLEAHYQCI (90 aa). Asn-143 carries N-linked (GlcNAc...) asparagine glycosylation. A disordered region spans residues 183–302; sequence PPHTVTHSTP…GSPASGNNSV (120 aa). Residues 186–198 are compositionally biased toward low complexity; it reads TVTHSTPSSSTVP. Over residues 244 to 262 the composition is skewed to polar residues; that stretch reads PSSKLPSAGNATAPSNTRI. Asn-253 carries an N-linked (GlcNAc...) asparagine glycan. Low complexity-rich tracts occupy residues 272 to 282 and 290 to 301; these read DDGTLLTTKSS and ASNGSPASGNNS. Residues Asn-299, Asn-338, Asn-395, Asn-652, Asn-701, and Asn-728 are each glycosylated (N-linked (GlcNAc...) asparagine). The tract at residues 373-397 is disordered; it reads YDEYDDDPSSTTPAPSGGDCLHNSS. The GAIN-B domain occupies 558–752; that stretch reads RSVVQKVKNI…AILMDVVDEH (195 aa). 2 disulfide bridges follow: Cys-707–Cys-734 and Cys-722–Cys-736. The interval 707–752 is GPS; that stretch reads CVFWNYIDHAWSANGCSLESTNRTHSVCSCNHLTNFAILMDVVDEH. Residues 766 to 786 form a helical membrane-spanning segment; the sequence is VFIYISIAICVVFIVIALLTL. Topologically, residues 787 to 799 are cytoplasmic; sequence KLFNGVFVKSART. A helical membrane pass occupies residues 800 to 820; the sequence is TIYTSIYVCLLAIELLFLLGI. Residues 821-826 are Extracellular-facing; it reads EQTETS. Residues 827-847 traverse the membrane as a helical segment; it reads IFCGFITVFLHCAILSGAAWF. At 848 to 873 the chain is on the cytoplasmic side; it reads CYEAFHSYYTLTSDELLVEVDQTPKV. The chain crosses the membrane as a helical span at residues 874–894; the sequence is NWYYLLSYGLSVSVVAISVAI. The Extracellular segment spans residues 895–911; sequence NPSTYTQNDYCVLMEAN. The helical transmembrane segment at 912–932 threads the bilayer; the sequence is ILFYATFVAPVLIFFVAAIGY. Residues 933 to 966 lie on the Cytoplasmic side of the membrane; the sequence is TFLSWIIMCRKSCTGLKTKEHTRLASVRFDIRCS. Residues 967–987 form a helical membrane-spanning segment; the sequence is FVFLLLLSAVWCSAYFYLRGA. Residues 988 to 994 are Extracellular-facing; sequence KTDEDTT. Residues 995-1015 traverse the membrane as a helical segment; sequence TIYGYCFICFNTLLGLYIFVF. Residues 1016 to 1714 are Cytoplasmic-facing; that stretch reads HCIQNEKIRR…VRCYLEPLAK (699 aa). A phosphoserine mark is found at Ser-1155, Ser-1245, and Ser-1252. Disordered stretches follow at residues 1229 to 1253, 1268 to 1287, 1293 to 1354, 1447 to 1536, and 1551 to 1694; these read PNSQ…LHSR, KTKQ…LDPP, AFYQ…PPPH, GGGS…DERM, and FQRQ…QQRH. Low complexity predominate over residues 1296 to 1315; that stretch reads QQQQQMRRQQQQQQQQQQQQ. A phosphoserine mark is found at Ser-1317 and Ser-1318. 2 stretches are compositionally biased toward low complexity: residues 1330 to 1348 and 1453 to 1478; these read LHLQ…QQQL and GGSV…QQQR. Composition is skewed to acidic residues over residues 1486–1500 and 1510–1523; these read DDDD…DEAT and CDDD…DLDD. A compositionally biased stretch (basic and acidic residues) spans 1524 to 1536; the sequence is DAHKLPPQSDERM. The segment covering 1565–1580 has biased composition (low complexity); it reads GALPPGVAPGAGSAGP. The span at 1644–1659 shows a compositional bias: polar residues; the sequence is QTPAQKRQQLQKLSPQ. Residues 1660–1675 show a composition bias toward low complexity; the sequence is STTSSSSHTSHSNLQP. The segment covering 1679–1693 has biased composition (basic residues); sequence PLTHQHPHPPQHQQR.

It belongs to the G-protein coupled receptor 2 family. LN-TM7 subfamily. Forms a heterodimer, consisting of a large extracellular region non-covalently linked to a seven-transmembrane moiety. In terms of processing, proteolytically cleaved into 2 subunits, an extracellular subunit and a seven-transmembrane subunit.

It localises to the cell membrane. In Drosophila ananassae (Fruit fly), this protein is Latrophilin Cirl.